A 113-amino-acid polypeptide reads, in one-letter code: Iron-sulfur cluster insertion protein ErpA (113 aa).

Iron-sulfur cluster-binding residues include Cys41, Cys105, and Cys107.

The protein belongs to the HesB/IscA family. Homodimer. It depends on iron-sulfur cluster as a cofactor.

Required for insertion of 4Fe-4S clusters for at least IspG. This chain is Iron-sulfur cluster insertion protein ErpA, found in Vibrio vulnificus (strain CMCP6).